The sequence spans 210 residues: Ribosomal RNA small subunit methyltransferase G (210 aa).

Residues Gly74, Phe79, 127–128, and Arg143 each bind S-adenosyl-L-methionine; that span reads IE.

It belongs to the methyltransferase superfamily. RNA methyltransferase RsmG family.

It is found in the cytoplasm. It carries out the reaction guanosine(527) in 16S rRNA + S-adenosyl-L-methionine = N(7)-methylguanosine(527) in 16S rRNA + S-adenosyl-L-homocysteine. Specifically methylates the N7 position of guanine in position 527 of 16S rRNA. The protein is Ribosomal RNA small subunit methyltransferase G of Chelativorans sp. (strain BNC1).